A 269-amino-acid chain; its full sequence is Phosphatidylglycerol--prolipoprotein diacylglyceryl transferase (269 aa).

The next 7 helical transmembrane spans lie at 10–30, 56–76, 92–112, 120–140, 174–194, 202–222, and 237–257; these read VALAIGPLKIHWYGLMYLIGI, MVFWMSMGVIVGGRLGYVLFY, WKGGMSFHGGFIGVMLAAWWF, FFELMDFVAPMVPIGLGAGRI, PSQLYQFALEGVALFLILWLF, MAVSGMFALFYGIFRFIVEFV, and LTMGQVLCVPMILGGLGLIWL. Arg139 is an a 1,2-diacyl-sn-glycero-3-phospho-(1'-sn-glycerol) binding site.

It belongs to the Lgt family.

The protein localises to the cell inner membrane. It carries out the reaction L-cysteinyl-[prolipoprotein] + a 1,2-diacyl-sn-glycero-3-phospho-(1'-sn-glycerol) = an S-1,2-diacyl-sn-glyceryl-L-cysteinyl-[prolipoprotein] + sn-glycerol 1-phosphate + H(+). Its pathway is protein modification; lipoprotein biosynthesis (diacylglyceryl transfer). Functionally, catalyzes the transfer of the diacylglyceryl group from phosphatidylglycerol to the sulfhydryl group of the N-terminal cysteine of a prolipoprotein, the first step in the formation of mature lipoproteins. The sequence is that of Phosphatidylglycerol--prolipoprotein diacylglyceryl transferase from Pseudomonas fluorescens (strain ATCC BAA-477 / NRRL B-23932 / Pf-5).